Reading from the N-terminus, the 200-residue chain is UPF0301 protein Veis_1517 (200 aa).

This sequence belongs to the UPF0301 (AlgH) family.

This Verminephrobacter eiseniae (strain EF01-2) protein is UPF0301 protein Veis_1517.